We begin with the raw amino-acid sequence, 194 residues long: Holliday junction branch migration complex subunit RuvA (194 aa).

The tract at residues 1–63 is domain I; the sequence is MFEYLYGTVE…EDTYKLIGFL (63 aa). Residues 64 to 142 form a domain II region; the sequence is DERDRKIFEL…NLTYTEEETV (79 aa). The tract at residues 143–147 is flexible linker; it reads SMDML. The segment at 147-194 is domain III; sequence LEDLVLALEGLGYNKKEIDKTLEKIDLNKFSSLEDAIKGILKNMRIGD.

The protein belongs to the RuvA family. As to quaternary structure, homotetramer. Forms an RuvA(8)-RuvB(12)-Holliday junction (HJ) complex. HJ DNA is sandwiched between 2 RuvA tetramers; dsDNA enters through RuvA and exits via RuvB. An RuvB hexamer assembles on each DNA strand where it exits the tetramer. Each RuvB hexamer is contacted by two RuvA subunits (via domain III) on 2 adjacent RuvB subunits; this complex drives branch migration. In the full resolvosome a probable DNA-RuvA(4)-RuvB(12)-RuvC(2) complex forms which resolves the HJ.

The protein resides in the cytoplasm. In terms of biological role, the RuvA-RuvB-RuvC complex processes Holliday junction (HJ) DNA during genetic recombination and DNA repair, while the RuvA-RuvB complex plays an important role in the rescue of blocked DNA replication forks via replication fork reversal (RFR). RuvA specifically binds to HJ cruciform DNA, conferring on it an open structure. The RuvB hexamer acts as an ATP-dependent pump, pulling dsDNA into and through the RuvAB complex. HJ branch migration allows RuvC to scan DNA until it finds its consensus sequence, where it cleaves and resolves the cruciform DNA. This Fusobacterium nucleatum subsp. nucleatum (strain ATCC 25586 / DSM 15643 / BCRC 10681 / CIP 101130 / JCM 8532 / KCTC 2640 / LMG 13131 / VPI 4355) protein is Holliday junction branch migration complex subunit RuvA.